A 620-amino-acid polypeptide reads, in one-letter code: Pentatricopeptide repeat-containing protein At5g66520 (620 aa).

10 PPR repeats span residues 79 to 113, 114 to 148, 149 to 179, 180 to 210, 211 to 245, 246 to 280, 281 to 311, 312 to 346, 347 to 382, and 383 to 413; these read DTFLWNLMIRGFSCSDEPERSLLLYQRMLCSSAPH, NAYTFPSLLKACSNLSAFEETTQIHAQITKLGYEN, DVYAVNSLINSYAVTGNFKLAHLLFDRIPEP, DDVSWNSVIKGYVKAGKMDIALTLFRKMAEK, NAISWTTMISGYVQADMNKEALQLFHEMQNSDVEP, DNVSLANALSACAQLGALEQGKWIHSYLNKTRIRM, DSVLGCVLIDMYAKCGEMEEALEVFKNIKKK, SVQAWTALISGYAYHGHGREAISKFMEMQKMGIKP, NVITFTAVLTACSYTGLVEEGKLIFYSMERDYNLKP, and TIEHYGCIVDLLGRAGLLDEAKRFIQEMPLK. Positions 418–493 are type E motif; it reads IWGALLKACR…VPGCSTISLE (76 aa). Residues 494 to 524 form a type E(+) motif region; that stretch reads GTTHEFLAGDRSHPEIEKIQSKWRIMRRKLE. The segment at 525–620 is type DYW motif; sequence ENGYVPELEE…DGKCSCGDYW (96 aa).

It belongs to the PPR family. PCMP-H subfamily.

This chain is Pentatricopeptide repeat-containing protein At5g66520 (PCMP-H61), found in Arabidopsis thaliana (Mouse-ear cress).